The primary structure comprises 555 residues: Dihydroxy-acid dehydratase (555 aa).

Mg(2+) is bound at residue aspartate 78. Cysteine 119 serves as a coordination point for [2Fe-2S] cluster. Positions 120 and 121 each coordinate Mg(2+). Lysine 121 is modified (N6-carboxylysine). Cysteine 192 contacts [2Fe-2S] cluster. Glutamate 444 lines the Mg(2+) pocket. Serine 470 acts as the Proton acceptor in catalysis.

The protein belongs to the IlvD/Edd family. As to quaternary structure, homodimer. The cofactor is [2Fe-2S] cluster. Mg(2+) serves as cofactor.

The catalysed reaction is (2R)-2,3-dihydroxy-3-methylbutanoate = 3-methyl-2-oxobutanoate + H2O. The enzyme catalyses (2R,3R)-2,3-dihydroxy-3-methylpentanoate = (S)-3-methyl-2-oxopentanoate + H2O. It participates in amino-acid biosynthesis; L-isoleucine biosynthesis; L-isoleucine from 2-oxobutanoate: step 3/4. The protein operates within amino-acid biosynthesis; L-valine biosynthesis; L-valine from pyruvate: step 3/4. Its function is as follows. Functions in the biosynthesis of branched-chain amino acids. Catalyzes the dehydration of (2R,3R)-2,3-dihydroxy-3-methylpentanoate (2,3-dihydroxy-3-methylvalerate) into 2-oxo-3-methylpentanoate (2-oxo-3-methylvalerate) and of (2R)-2,3-dihydroxy-3-methylbutanoate (2,3-dihydroxyisovalerate) into 2-oxo-3-methylbutanoate (2-oxoisovalerate), the penultimate precursor to L-isoleucine and L-valine, respectively. This is Dihydroxy-acid dehydratase from Halalkalibacterium halodurans (strain ATCC BAA-125 / DSM 18197 / FERM 7344 / JCM 9153 / C-125) (Bacillus halodurans).